The chain runs to 100 residues: Large ribosomal subunit protein uL23 (100 aa).

The protein belongs to the universal ribosomal protein uL23 family. In terms of assembly, part of the 50S ribosomal subunit. Contacts protein L29, and trigger factor when it is bound to the ribosome.

Functionally, one of the early assembly proteins it binds 23S rRNA. One of the proteins that surrounds the polypeptide exit tunnel on the outside of the ribosome. Forms the main docking site for trigger factor binding to the ribosome. The polypeptide is Large ribosomal subunit protein uL23 (Mycobacterium ulcerans (strain Agy99)).